The primary structure comprises 422 residues: Tyrosine--tRNA ligase (422 aa).

Tyr37 is a binding site for L-tyrosine. The 'HIGH' region motif lies at Pro42–His51. Tyr175 and Gln179 together coordinate L-tyrosine. A 'KMSKS' region motif is present at residues Lys235–Thr239. Lys238 contacts ATP. The S4 RNA-binding domain occupies Lys357–Lys414.

It belongs to the class-I aminoacyl-tRNA synthetase family. TyrS type 1 subfamily. As to quaternary structure, homodimer.

The protein resides in the cytoplasm. The catalysed reaction is tRNA(Tyr) + L-tyrosine + ATP = L-tyrosyl-tRNA(Tyr) + AMP + diphosphate + H(+). Its function is as follows. Catalyzes the attachment of tyrosine to tRNA(Tyr) in a two-step reaction: tyrosine is first activated by ATP to form Tyr-AMP and then transferred to the acceptor end of tRNA(Tyr). The sequence is that of Tyrosine--tRNA ligase from Buchnera aphidicola subsp. Acyrthosiphon pisum (strain 5A).